The chain runs to 191 residues: Large ribosomal subunit protein uL3 (191 aa).

The segment at 115–137 (GGPASHGSRFHRRHGSIGNREWP) is disordered.

It belongs to the universal ribosomal protein uL3 family. As to quaternary structure, part of the 50S ribosomal subunit. Forms a cluster with proteins L14 and L19.

Its function is as follows. One of the primary rRNA binding proteins, it binds directly near the 3'-end of the 23S rRNA, where it nucleates assembly of the 50S subunit. This chain is Large ribosomal subunit protein uL3 (rplC), found in Campylobacter jejuni subsp. jejuni serotype O:2 (strain ATCC 700819 / NCTC 11168).